The following is a 510-amino-acid chain: Maturase K (510 aa).

Belongs to the intron maturase 2 family. MatK subfamily.

Its subcellular location is the plastid. It localises to the chloroplast. Usually encoded in the trnK tRNA gene intron. Probably assists in splicing its own and other chloroplast group II introns. The polypeptide is Maturase K (Spirodela intermedia (Intermediate duckweed)).